The primary structure comprises 340 residues: Tryptophan--tRNA ligase (340 aa).

Residues 11–13 and 19–20 contribute to the ATP site; these read RPT and GH. The 'HIGH' region motif lies at 12–20; sequence PTGKLHLGH. Residue Asp140 participates in L-tryptophan binding. ATP-binding positions include 152-154, Leu194, and 202-206; these read GND and KMSKS. A 'KMSKS' region motif is present at residues 202–206; the sequence is KMSKS.

This sequence belongs to the class-I aminoacyl-tRNA synthetase family. As to quaternary structure, homodimer.

Its subcellular location is the cytoplasm. The catalysed reaction is tRNA(Trp) + L-tryptophan + ATP = L-tryptophyl-tRNA(Trp) + AMP + diphosphate + H(+). In terms of biological role, catalyzes the attachment of tryptophan to tRNA(Trp). This is Tryptophan--tRNA ligase from Streptococcus pyogenes serotype M1.